The chain runs to 205 residues: LexA repressor (205 aa).

The segment at residues Arg-28 to Lys-48 is a DNA-binding region (H-T-H motif). Active-site for autocatalytic cleavage activity residues include Ser-122 and Lys-159.

The protein belongs to the peptidase S24 family. As to quaternary structure, homodimer.

It carries out the reaction Hydrolysis of Ala-|-Gly bond in repressor LexA.. Functionally, represses a number of genes involved in the response to DNA damage (SOS response), including recA and lexA. Binds to the 16 bp palindromic sequence 5'-CTGTATATATATACAG-3'. In the presence of single-stranded DNA, RecA interacts with LexA causing an autocatalytic cleavage which disrupts the DNA-binding part of LexA, leading to derepression of the SOS regulon and eventually DNA repair. This chain is LexA repressor, found in Providencia rettgeri.